Consider the following 465-residue polypeptide: Cysteine--tRNA ligase (465 aa).

Cysteine 30 is a Zn(2+) binding site. The 'HIGH' region signature appears at 32-42 (ITVYDYCHVGH). Zn(2+)-binding residues include cysteine 214, histidine 239, and glutamate 243. Positions 271–275 (KMSKS) match the 'KMSKS' region motif. Lysine 274 lines the ATP pocket.

The protein belongs to the class-I aminoacyl-tRNA synthetase family. In terms of assembly, monomer. Requires Zn(2+) as cofactor.

Its subcellular location is the cytoplasm. The catalysed reaction is tRNA(Cys) + L-cysteine + ATP = L-cysteinyl-tRNA(Cys) + AMP + diphosphate. This is Cysteine--tRNA ligase from Burkholderia orbicola (strain MC0-3).